Reading from the N-terminus, the 622-residue chain is Palmitoyl-protein thioesterase-dolichyl pyrophosphate phosphatase fusion 1 (622 aa).

An N-terminal signal peptide occupies residues 1-24; that stretch reads MLSCSSFLIFFLFSWVLLPMKSFA. At 25–405 the chain is on the lumenal side; sequence IPIISLDKVR…NVSEEKGPKS (381 aa). Cysteine 106 and cysteine 138 are disulfide-bonded. Residue serine 125 is part of the active site. N-linked (GlcNAc...) asparagine glycosylation is present at asparagine 223. Aspartate 245 is a catalytic residue. Asparagine 260 is a glycosylation site (N-linked (GlcNAc...) asparagine). Residue histidine 298 is part of the active site. N-linked (GlcNAc...) asparagine glycosylation occurs at asparagine 396. The helical transmembrane segment at 406-426 threads the bilayer; it reads FANLAFITIFSHFFYHIDDMW. The Cytoplasmic segment spans residues 427-428; sequence RS. The helical transmembrane segment at 429–449 threads the bilayer; that stretch reads TLGLFSLIPQIIGIIYLTVMF. The Lumenal portion of the chain corresponds to 450–488; sequence TGRELDTFMQFGGQVVNEFINYVVKVSLKYPRPADIEYG. Residues 489 to 511 form a helical membrane-spanning segment; the sequence is VGYGMPSSHSQFMGFFSAYMIAW. The Cytoplasmic portion of the chain corresponds to 512 to 519; it reads DYKYRRSQ. The helical transmembrane segment at 520 to 540 threads the bilayer; it reads CFSMLSFAKYAIYLTLSTFVC. Residues 541 to 552 lie on the Lumenal side of the membrane; the sequence is SSRYLLDFHYLT. A helical transmembrane segment spans residues 553–573; sequence QVVYGYMIGFGVGLFWVYLVG. The Cytoplasmic portion of the chain corresponds to 574-622; sequence KLRSLGVTKWLLSLPPLQFFYIKDTIPHSKDNHKRQWLESKQFKNQKSN.

The protein in the N-terminal section; belongs to the palmitoyl-protein thioesterase family. It in the C-terminal section; belongs to the dolichyldiphosphatase family. Post-translationally, proteolytically cleaved, possibly by krp1.

Its subcellular location is the vacuole. It localises to the endoplasmic reticulum membrane. The catalysed reaction is S-hexadecanoyl-L-cysteinyl-[protein] + H2O = L-cysteinyl-[protein] + hexadecanoate + H(+). It carries out the reaction a di-trans,poly-cis-dolichyl diphosphate + H2O = a di-trans,poly-cis-dolichyl phosphate + phosphate + H(+). In terms of biological role, essential protein. Removes thioester-linked fatty acyl groups such as palmitate from modified cysteine residues in proteins or peptides during vacuolar degradation. Required for efficient N-glycosylation. Necessary for maintaining optimal levels of dolichol-linked oligosaccharides. This Schizosaccharomyces pombe (strain 972 / ATCC 24843) (Fission yeast) protein is Palmitoyl-protein thioesterase-dolichyl pyrophosphate phosphatase fusion 1 (pdf1).